The chain runs to 873 residues: Leucine--tRNA ligase (873 aa).

The short motif at 42–52 is the 'HIGH' region element; sequence PYPSGKLHMGH. The 'KMSKS' region signature appears at 628–632; sequence KMSKS. Lys631 is a binding site for ATP.

This sequence belongs to the class-I aminoacyl-tRNA synthetase family.

Its subcellular location is the cytoplasm. It carries out the reaction tRNA(Leu) + L-leucine + ATP = L-leucyl-tRNA(Leu) + AMP + diphosphate. This is Leucine--tRNA ligase from Azoarcus sp. (strain BH72).